The primary structure comprises 465 residues: Methionine aminopeptidase 2-1 (465 aa).

The segment at 1-100 (MGSKTAENES…QSSPPRIPLA (100 aa)) is disordered. Residues 31 to 40 (RGAHWSRDGD) are compositionally biased toward basic and acidic residues. The span at 75 to 87 (SKKRKKRPKKKTS) shows a compositional bias: basic residues. Residue H216 coordinates substrate. A divalent metal cation contacts are provided by D237, D248, and H317. H325 serves as a coordination point for substrate. Residues E350 and E446 each coordinate a divalent metal cation.

This sequence belongs to the peptidase M24A family. Methionine aminopeptidase eukaryotic type 2 subfamily. Co(2+) serves as cofactor. It depends on Zn(2+) as a cofactor. Mn(2+) is required as a cofactor. The cofactor is Fe(2+).

Its subcellular location is the cytoplasm. It catalyses the reaction Release of N-terminal amino acids, preferentially methionine, from peptides and arylamides.. In terms of biological role, cotranslationally removes the N-terminal methionine from nascent proteins. The N-terminal methionine is often cleaved when the second residue in the primary sequence is small and uncharged (Met-Ala-, Cys, Gly, Pro, Ser, Thr, or Val). This is Methionine aminopeptidase 2-1 from Penicillium rubens (strain ATCC 28089 / DSM 1075 / NRRL 1951 / Wisconsin 54-1255) (Penicillium chrysogenum).